The chain runs to 271 residues: Troponin T, fast skeletal muscle (271 aa).

Positions 1 to 21 (MSDEEVEHVEEEYEEEEEAQE) are enriched in acidic residues. Residues 1 to 74 (MSDEEVEHVE…EKVDFDDIQK (74 aa)) form a disordered region. Ser-2 bears the N-acetylserine mark. Ser-2 bears the Phosphoserine mark. Composition is skewed to basic and acidic residues over residues 29–53 (EVHE…EKPR) and 62–74 (PEGE…DIQK). A Phosphoserine modification is found at Ser-90. Residues 113-155 (RAERAEQQRIRAEKERERQNRLAEEKARREEEEAKRRAEDDLK) show a composition bias toward basic and acidic residues. Residues 113 to 192 (RAERAEQQRI…TAREMKKKVL (80 aa)) are disordered. 3 positions are modified to phosphoserine: Ser-161, Ser-168, and Ser-169. Basic and acidic residues predominate over residues 183–192 (TAREMKKKVL). At Ser-205 the chain carries Phosphoserine. A Phosphotyrosine modification is found at Tyr-221. The disordered stretch occupies residues 249 to 271 (DQAQKHSKKAGTTPKGKVGGRWK).

This sequence belongs to the troponin T family.

In terms of biological role, troponin T is the tropomyosin-binding subunit of troponin, the thin filament regulatory complex which confers calcium-sensitivity to striated muscle actomyosin ATPase activity. This is Troponin T, fast skeletal muscle (TNNT3) from Sus scrofa (Pig).